A 299-amino-acid chain; its full sequence is Adenylate kinase (299 aa).

A disordered region spans residues Met-1–Gly-30. Gly-85–Thr-90 is an ATP binding site. Positions Ala-107–Val-136 are NMP. Residues Thr-108, Arg-113, Gly-134–Val-136, Gly-163–Arg-166, and Gln-170 each bind AMP. Residues Gly-204–Asp-241 are LID. ATP-binding positions include Arg-205 and Ser-214–Tyr-215. Residues Gly-212–Gln-237 are disordered. A compositionally biased stretch (basic and acidic residues) spans Tyr-215–Thr-227. AMP-binding residues include Arg-238 and Arg-249. Residue Gln-277 coordinates ATP.

Belongs to the adenylate kinase family. AK2 subfamily. Monomer.

The protein resides in the cytoplasm. It localises to the cytosol. It is found in the mitochondrion intermembrane space. It carries out the reaction AMP + ATP = 2 ADP. Catalyzes the reversible transfer of the terminal phosphate group between ATP and AMP. Plays an important role in cellular energy homeostasis and in adenine nucleotide metabolism. Adenylate kinase activity is critical for regulation of the phosphate utilization and the AMP de novo biosynthesis pathways. The sequence is that of Adenylate kinase from Mycosarcoma maydis (Corn smut fungus).